The sequence spans 425 residues: 3-phosphoshikimate 1-carboxyvinyltransferase (425 aa).

Residues K23, S24, and R28 each contribute to the 3-phosphoshikimate site. Residue K23 coordinates phosphoenolpyruvate. G96 and R124 together coordinate phosphoenolpyruvate. Residues T170, S171, Q172, S198, D314, and K341 each contribute to the 3-phosphoshikimate site. Phosphoenolpyruvate is bound at residue Q172. Catalysis depends on D314, which acts as the Proton acceptor. Residues R345, R386, and K411 each contribute to the phosphoenolpyruvate site.

It belongs to the EPSP synthase family. In terms of assembly, monomer.

The protein localises to the cytoplasm. The enzyme catalyses 3-phosphoshikimate + phosphoenolpyruvate = 5-O-(1-carboxyvinyl)-3-phosphoshikimate + phosphate. Its pathway is metabolic intermediate biosynthesis; chorismate biosynthesis; chorismate from D-erythrose 4-phosphate and phosphoenolpyruvate: step 6/7. Its function is as follows. Catalyzes the transfer of the enolpyruvyl moiety of phosphoenolpyruvate (PEP) to the 5-hydroxyl of shikimate-3-phosphate (S3P) to produce enolpyruvyl shikimate-3-phosphate and inorganic phosphate. This Nostoc sp. (strain PCC 7120 / SAG 25.82 / UTEX 2576) protein is 3-phosphoshikimate 1-carboxyvinyltransferase.